The chain runs to 310 residues: 4-hydroxyproline 2-epimerase (310 aa).

Cys-88 functions as the Proton acceptor in the catalytic mechanism. Substrate is bound by residues 89–90, His-208, and Asp-232; that span reads GH. The active-site Proton donor is Cys-236. 237–238 serves as a coordination point for substrate; sequence GT.

This sequence belongs to the proline racemase family.

The catalysed reaction is trans-4-hydroxy-L-proline = cis-4-hydroxy-D-proline. Catalyzes the epimerization of trans-4-hydroxy-L-proline (t4LHyp) to cis-4-hydroxy-D-proline (c4DHyp). Is likely involved in a degradation pathway that converts t4LHyp to alpha-ketoglutarate. Displays no proline racemase activity. The chain is 4-hydroxyproline 2-epimerase from Pseudomonas fluorescens (strain ATCC BAA-477 / NRRL B-23932 / Pf-5).